Here is a 476-residue protein sequence, read N- to C-terminus: Aspartyl/glutamyl-tRNA(Asn/Gln) amidotransferase subunit B (476 aa).

This sequence belongs to the GatB/GatE family. GatB subfamily. Heterotrimer of A, B and C subunits.

The catalysed reaction is L-glutamyl-tRNA(Gln) + L-glutamine + ATP + H2O = L-glutaminyl-tRNA(Gln) + L-glutamate + ADP + phosphate + H(+). It catalyses the reaction L-aspartyl-tRNA(Asn) + L-glutamine + ATP + H2O = L-asparaginyl-tRNA(Asn) + L-glutamate + ADP + phosphate + 2 H(+). Allows the formation of correctly charged Asn-tRNA(Asn) or Gln-tRNA(Gln) through the transamidation of misacylated Asp-tRNA(Asn) or Glu-tRNA(Gln) in organisms which lack either or both of asparaginyl-tRNA or glutaminyl-tRNA synthetases. The reaction takes place in the presence of glutamine and ATP through an activated phospho-Asp-tRNA(Asn) or phospho-Glu-tRNA(Gln). The protein is Aspartyl/glutamyl-tRNA(Asn/Gln) amidotransferase subunit B of Clostridium botulinum (strain Langeland / NCTC 10281 / Type F).